Consider the following 310-residue polypeptide: Glutaminase (310 aa).

Substrate-binding residues include Ser67, Asn118, Glu161, Asn168, Tyr192, Tyr244, and Val262.

This sequence belongs to the glutaminase family. As to quaternary structure, homotetramer.

The enzyme catalyses L-glutamine + H2O = L-glutamate + NH4(+). This is Glutaminase from Legionella pneumophila (strain Lens).